The sequence spans 136 residues: Probable acyltransferase SID5 (136 aa).

The protein operates within siderophore biosynthesis. Its function is as follows. Probable acyltransferase; part of the gene cluster that mediates the biosynthesis of hydroxamate-containing siderophores that play a critical role in virulence via intracellular iron acquisition during macrophage infection. The protein is Probable acyltransferase SID5 of Ajellomyces capsulatus (Darling's disease fungus).